Reading from the N-terminus, the 644-residue chain is 3D-(3,5/4)-trihydroxycyclohexane-1,2-dione hydrolase (644 aa).

Glu-65 is a thiamine diphosphate binding site. The interval 442–522 is thiamine pyrophosphate binding; sequence SLPGDLQRMW…INVLLFDNSG (81 aa). Positions 493 and 520 each coordinate Mg(2+).

Belongs to the TPP enzyme family. Mg(2+) serves as cofactor. It depends on thiamine diphosphate as a cofactor.

The catalysed reaction is 3D-3,5/4-trihydroxycyclohexane-1,2-dione + H2O = 5-deoxy-D-glucuronate + H(+). The protein operates within polyol metabolism; myo-inositol degradation into acetyl-CoA; acetyl-CoA from myo-inositol: step 3/7. In terms of biological role, involved in the cleavage of the C1-C2 bond of 3D-(3,5/4)-trihydroxycyclohexane-1,2-dione (THcHDO) to yield 5-deoxy-glucuronate (5DG). This is 3D-(3,5/4)-trihydroxycyclohexane-1,2-dione hydrolase from Bacillus anthracis (strain A0248).